Consider the following 146-residue polypeptide: Basic phospholipase A2 (146 aa).

An N-terminal signal peptide occupies residues 1–21 (MYPAHLLVLLAVCVSLLGAAS). Residues 22-27 (IPPLPL) constitute a propeptide that is removed on maturation. Intrachain disulfides connect C38–C98, C54–C145, C56–C72, C71–C126, C78–C119, C87–C112, and C105–C117. Positions 55, 57, and 59 each coordinate Ca(2+). H75 is a catalytic residue. D76 serves as a coordination point for Ca(2+). D120 is a catalytic residue.

This sequence belongs to the phospholipase A2 family. Group I subfamily. D49 sub-subfamily. Requires Ca(2+) as cofactor. In terms of tissue distribution, expressed by the venom gland.

Its subcellular location is the secreted. The catalysed reaction is a 1,2-diacyl-sn-glycero-3-phosphocholine + H2O = a 1-acyl-sn-glycero-3-phosphocholine + a fatty acid + H(+). In terms of biological role, snake venom phospholipase A2 (PLA2) that inhibits neuromuscular transmission by blocking acetylcholine release from the nerve termini. PLA2 catalyzes the calcium-dependent hydrolysis of the 2-acyl groups in 3-sn-phosphoglycerides. This Hydrophis hardwickii (Hardwick's spine-bellied seasnake) protein is Basic phospholipase A2.